A 244-amino-acid chain; its full sequence is MRDRISAFLEEKQGLSVNSKQSYKYDLEQFLDMVGERISETSLKIYQAQLANLKISAQKRKISACNQFLYFLYQKGEVDSFYRLELAKQAEKKTEKPEILYLDSFWQESDHPEGRLLALLILEMGLLPSEILAIKVADINLDFQVLRISKASQRRIVTIPTALLSELEPLMGQTYLFERGGKPYSRQWAFRQLESFVKEKGFPSLSAQVLREQFILRQIENKVDLYEIAKKLGLKTVLTLEKYR.

Residues 1–73 enclose the Core-binding (CB) domain; it reads MRDRISAFLE…ACNQFLYFLY (73 aa). Positions 90 to 244 constitute a Tyr recombinase domain; it reads AEKKTEKPEI…KTVLTLEKYR (155 aa). Residues Lys-150 and Arg-211 contribute to the active site. Tyr-243 functions as the O-(3'-phospho-DNA)-tyrosine intermediate in the catalytic mechanism.

The protein belongs to the 'phage' integrase family. XerD-like subfamily.

It is found in the cytoplasm. Functionally, putative tyrosine recombinase. Not involved in the cutting and rejoining of the recombining DNA molecules on dif(SL) site. This chain is Tyrosine recombinase XerD-like, found in Streptococcus pneumoniae (strain Hungary19A-6).